The primary structure comprises 1083 residues: Error-prone DNA polymerase (1083 aa).

The protein belongs to the DNA polymerase type-C family. DnaE2 subfamily.

The protein localises to the cytoplasm. The catalysed reaction is DNA(n) + a 2'-deoxyribonucleoside 5'-triphosphate = DNA(n+1) + diphosphate. Functionally, DNA polymerase involved in damage-induced mutagenesis and translesion synthesis (TLS). It is not the major replicative DNA polymerase. This chain is Error-prone DNA polymerase, found in Xanthomonas oryzae pv. oryzae (strain KACC10331 / KXO85).